The sequence spans 181 residues: Salmonella anti-inflammatory response activator (181 aa).

The helical transmembrane segment at 4-24 (FVYIYILVIYGSYLWFSLGGN) threads the bilayer.

As to quaternary structure, interacts with host (human) STAT3.

It localises to the membrane. The protein localises to the host cytoplasm. In terms of biological role, a Salmonella strain-specific effector that induces a host STAT3-dependent anti-inflammatory pathway. In bacteria-infected host cells (human) leads to phosphorylation of host STAT3, at least on 'Tyr-705' and interleukin-10 (IL-10, IL10) production; expressing the gene alone in host cells induces STAT3 phosphorylation and IL-10 production. IL-10 production requires STAT3 in infected cells. Contributes to virulence in mouse infection models. Encoded in only a few S.typhimurium serovars, it may be a specific effector for adaptation to bovine hosts. In Salmonella typhimurium (strain 14028s / SGSC 2262), this protein is Salmonella anti-inflammatory response activator.